The sequence spans 94 residues: Small ribosomal subunit protein uS19 (94 aa).

Belongs to the universal ribosomal protein uS19 family.

In terms of biological role, protein S19 forms a complex with S13 that binds strongly to the 16S ribosomal RNA. This Clostridium botulinum (strain Hall / ATCC 3502 / NCTC 13319 / Type A) protein is Small ribosomal subunit protein uS19.